Reading from the N-terminus, the 187-residue chain is Ribosome-recycling factor (187 aa).

It belongs to the RRF family.

It is found in the cytoplasm. Functionally, responsible for the release of ribosomes from messenger RNA at the termination of protein biosynthesis. May increase the efficiency of translation by recycling ribosomes from one round of translation to another. This chain is Ribosome-recycling factor, found in Paracoccus zeaxanthinifaciens.